Reading from the N-terminus, the 86-residue chain is Ferredoxin-like protein YgcO (86 aa).

One can recognise a 4Fe-4S ferredoxin-type domain in the interval 45-74 (GNLRIDYRSCLECGTCRLLCDESTLQQWRY).

This sequence belongs to the bacterial-type ferredoxin family. FixX subfamily.

Functionally, could be a 3Fe-4S cluster-containing protein. Probably participates in a redox process with YgcN, YgcQ and YgcR. The chain is Ferredoxin-like protein YgcO (ygcO) from Escherichia coli (strain K12).